The sequence spans 616 residues: Dihydroxy-acid dehydratase (616 aa).

A Mg(2+)-binding site is contributed by Asp81. Cys122 provides a ligand contact to [2Fe-2S] cluster. 2 residues coordinate Mg(2+): Asp123 and Lys124. An N6-carboxylysine modification is found at Lys124. Cys195 is a binding site for [2Fe-2S] cluster. Mg(2+) is bound at residue Glu491. Catalysis depends on Ser517, which acts as the Proton acceptor.

This sequence belongs to the IlvD/Edd family. Homodimer. It depends on [2Fe-2S] cluster as a cofactor. Mg(2+) serves as cofactor.

The enzyme catalyses (2R)-2,3-dihydroxy-3-methylbutanoate = 3-methyl-2-oxobutanoate + H2O. It catalyses the reaction (2R,3R)-2,3-dihydroxy-3-methylpentanoate = (S)-3-methyl-2-oxopentanoate + H2O. The protein operates within amino-acid biosynthesis; L-isoleucine biosynthesis; L-isoleucine from 2-oxobutanoate: step 3/4. It functions in the pathway amino-acid biosynthesis; L-valine biosynthesis; L-valine from pyruvate: step 3/4. Functions in the biosynthesis of branched-chain amino acids. Catalyzes the dehydration of (2R,3R)-2,3-dihydroxy-3-methylpentanoate (2,3-dihydroxy-3-methylvalerate) into 2-oxo-3-methylpentanoate (2-oxo-3-methylvalerate) and of (2R)-2,3-dihydroxy-3-methylbutanoate (2,3-dihydroxyisovalerate) into 2-oxo-3-methylbutanoate (2-oxoisovalerate), the penultimate precursor to L-isoleucine and L-valine, respectively. This Salmonella agona (strain SL483) protein is Dihydroxy-acid dehydratase.